We begin with the raw amino-acid sequence, 147 residues long: uncharacterized protein (147 aa).

One can recognise an HTH LytTR-type domain in the interval 44–147 (LVGYIDKEIH…LKSIKERLSI (104 aa)).

Its subcellular location is the cytoplasm. This is an uncharacterized protein from Staphylococcus aureus (strain COL).